The primary structure comprises 918 residues: Non-lysosomal glucosylceramidase (918 aa).

The tract at residues 886 to 918 (HKKSRRPSVTQGTGLSTQPECGPKRSLANLNSE) is disordered. Polar residues predominate over residues 892–904 (PSVTQGTGLSTQP). A Phosphoserine modification is found at Ser893.

This sequence belongs to the non-lysosomal glucosylceramidase family. Widely expressed at low level. Highly expressed in testis and brain. Ubiquitously expressed in the brain (at protein level). Expressed by Sertoli cells (at protein level).

It is found in the endoplasmic reticulum membrane. The protein localises to the golgi apparatus membrane. It catalyses the reaction a beta-D-glucosyl-(1&lt;-&gt;1')-N-acylsphing-4-enine + H2O = an N-acylsphing-4-enine + D-glucose. It carries out the reaction a beta-D-galactosyl-(1&lt;-&gt;1')-N-acylsphing-4-enine + H2O = an N-acylsphing-4-enine + D-galactose. The enzyme catalyses beta-D-glucosyl-(1-&gt;3)-O-lithocholate + H2O = lithocholate + D-glucose. The catalysed reaction is beta-D-glucosyl-(1-&gt;3)-O-chenodeoxycholate + H2O = chenodeoxycholate + D-glucose. It catalyses the reaction a di-trans,poly-cis-dolichyl beta-D-glucosyl phosphate + chenodeoxycholate = beta-D-glucosyl-(1-&gt;3)-O-chenodeoxycholate + a di-trans,poly-cis-dolichyl phosphate + H(+). It carries out the reaction octyl beta-D-glucose + chenodeoxycholate = beta-D-glucosyl-(1-&gt;3)-O-chenodeoxycholate + octan-1-ol. The enzyme catalyses cholesteryl 3-beta-D-glucoside + H2O = cholesterol + D-glucose. The catalysed reaction is a beta-D-glucosyl-(1&lt;-&gt;1')-N-acylsphing-4-enine + cholesterol = cholesteryl 3-beta-D-glucoside + an N-acylsphing-4-enine. It catalyses the reaction beta-D-glucosyl-N-(9Z-octadecenoyl)-sphing-4E-enine + cholesterol = N-(9Z-octadecenoyl)-sphing-4-enine + cholesteryl 3-beta-D-glucoside. It carries out the reaction a beta-D-galactosyl-(1&lt;-&gt;1')-N-acylsphing-4-enine + cholesterol = cholesteryl 3-beta-D-galactoside + an N-acylsphing-4-enine. The enzyme catalyses 1-(beta-D-galactosyl)-N-dodecanoylsphing-4-enine + cholesterol = cholesteryl 3-beta-D-galactoside + N-dodecanoylsphing-4-enine. The protein operates within lipid metabolism; sphingolipid metabolism. It functions in the pathway steroid metabolism; cholesterol metabolism. Enzymatic activity is dependent on membrane association and requires the presence of lipids. Inhibited by N-(adamantanemethyloxypentyl)-deoxynojirimycin/AMP-DNM. Inhibited by its product sphingosine/N-acylsphing-4-enine in a feedback loop. Also inhibited by other non-acetylated sphingoid bases and their derivatives but not by sphingosine-1-phosphate and complex sphingolipids. Non-lysosomal glucosylceramidase that catalyzes the hydrolysis of glucosylceramides/GlcCers (such as beta-D-glucosyl-(1&lt;-&gt;1')-N-acylsphing-4-enine) to free glucose and ceramides (such as N-acylsphing-4-enine). GlcCers are membrane glycosphingolipids that have a wide intracellular distribution. They are the main precursors of more complex glycosphingolipids that play a role in cellular growth, differentiation, adhesion, signaling, cytoskeletal dynamics and membrane properties. Also involved in the transglucosylation of cholesterol, transferring glucose from GlcCer, thereby modifying its water solubility and biological properties. Under specific conditions, may catalyze the reverse reaction, transferring glucose from cholesteryl-3-beta-D-glucoside to ceramide (such as N-acylsphing-4-enine). May play a role in the metabolism of bile acids. Able to hydrolyze bile acid 3-O-glucosides as well as to produce bile acid-glucose conjugates thanks to a bile acid glucosyl transferase activity. Catalyzes the hydrolysis of galactosylceramides/GalCers (such as beta-D-galactosyl-(1&lt;-&gt;1')-N-acylsphing-4-enine), as well as galactosyl transfer between GalCers and cholesterol in vitro with lower activity compared with their activity against GlcCers. This chain is Non-lysosomal glucosylceramidase, found in Mus musculus (Mouse).